The primary structure comprises 347 residues: High mobility group protein 20A (347 aa).

2 stretches are compositionally biased toward polar residues: residues 1 to 10 (MENLMTSSTL) and 40 to 49 (SGATSSTNNP). Disordered stretches follow at residues 1–113 (MENL…YVRF) and 179–211 (FSRKTQDRQKGKSHRQDAARQATHDHEKETEVK). The span at 55–66 (LSQGQLLQSESS) shows a compositional bias: low complexity. Basic and acidic residues predominate over residues 72-82 (NEQRHEDEQRS). The segment covering 83–96 (KRGGWSKGRKRKKP) has biased composition (basic residues). A DNA-binding region (HMG box) is located at residues 103–171 (PKSPLTGYVR…RYMKELEQYQ (69 aa)). Residue S105 is modified to Phosphoserine. The span at 182 to 211 (KTQDRQKGKSHRQDAARQATHDHEKETEVK) shows a compositional bias: basic and acidic residues. Residues 229 to 273 (SKAREAELRQLRKSNMEFEERNAALQKHVESMRTAVEKLEVDVIQ) are a coiled coil.

In terms of assembly, interacts with DTNB. As to expression, ubiquitous.

The protein localises to the nucleus. Its function is as follows. Plays a role in neuronal differentiation as chromatin-associated protein. Acts as inhibitor of HMG20B. Overcomes the repressive effects of the neuronal silencer REST and induces the activation of neuronal-specific genes. Involved in the recruitment of the histone methyltransferase KMT2A/MLL1 and consequent increased methylation of histone H3 lysine 4. The polypeptide is High mobility group protein 20A (HMG20A) (Homo sapiens (Human)).